A 368-amino-acid chain; its full sequence is 3-dehydroquinate synthase (368 aa).

NAD(+) is bound by residues 69-74 (DGEAYK), 103-107 (GVIGD), 127-128 (TT), lysine 140, and lysine 149. Zn(2+)-binding residues include glutamate 182, histidine 245, and histidine 262.

This sequence belongs to the sugar phosphate cyclases superfamily. Dehydroquinate synthase family. It depends on Co(2+) as a cofactor. Requires Zn(2+) as cofactor. NAD(+) is required as a cofactor.

Its subcellular location is the cytoplasm. The catalysed reaction is 7-phospho-2-dehydro-3-deoxy-D-arabino-heptonate = 3-dehydroquinate + phosphate. It participates in metabolic intermediate biosynthesis; chorismate biosynthesis; chorismate from D-erythrose 4-phosphate and phosphoenolpyruvate: step 2/7. In terms of biological role, catalyzes the conversion of 3-deoxy-D-arabino-heptulosonate 7-phosphate (DAHP) to dehydroquinate (DHQ). This Pseudomonas paraeruginosa (strain DSM 24068 / PA7) (Pseudomonas aeruginosa (strain PA7)) protein is 3-dehydroquinate synthase.